The following is a 438-amino-acid chain: tRNA modification GTPase MnmE (438 aa).

(6S)-5-formyl-5,6,7,8-tetrahydrofolate-binding residues include R21, E79, and K118. The TrmE-type G domain occupies G215–R362. A K(+)-binding site is contributed by N225. Residues N225–S230, T244–T250, and D269–G272 each bind GTP. S229 lines the Mg(2+) pocket. Residues T244, I246, and T249 each coordinate K(+). T250 is a Mg(2+) binding site. K438 lines the (6S)-5-formyl-5,6,7,8-tetrahydrofolate pocket.

Belongs to the TRAFAC class TrmE-Era-EngA-EngB-Septin-like GTPase superfamily. TrmE GTPase family. Homodimer. Heterotetramer of two MnmE and two MnmG subunits. K(+) is required as a cofactor.

Its subcellular location is the cytoplasm. Exhibits a very high intrinsic GTPase hydrolysis rate. Involved in the addition of a carboxymethylaminomethyl (cmnm) group at the wobble position (U34) of certain tRNAs, forming tRNA-cmnm(5)s(2)U34. This chain is tRNA modification GTPase MnmE, found in Maricaulis maris (strain MCS10) (Caulobacter maris).